The chain runs to 315 residues: ATP synthase gamma chain (315 aa).

Belongs to the ATPase gamma chain family. In terms of assembly, F-type ATPases have 2 components, CF(1) - the catalytic core - and CF(0) - the membrane proton channel. CF(1) has five subunits: alpha(3), beta(3), gamma(1), delta(1), epsilon(1). CF(0) has three main subunits: a, b and c.

Its subcellular location is the cellular thylakoid membrane. Its function is as follows. Produces ATP from ADP in the presence of a proton gradient across the membrane. The gamma chain is believed to be important in regulating ATPase activity and the flow of protons through the CF(0) complex. This chain is ATP synthase gamma chain, found in Nostoc punctiforme (strain ATCC 29133 / PCC 73102).